A 911-amino-acid chain; its full sequence is Protein translocase subunit SecA (911 aa).

ATP is bound by residues Gln87, 105–109, and Asp512; that span reads GEGKT. Positions 561-571 are enriched in basic and acidic residues; that stretch reads RHESRRIDNQL. The interval 561–583 is disordered; that stretch reads RHESRRIDNQLRGRSGRQGDPGS. Zn(2+) is bound by residues Cys895, Cys897, Cys906, and His907.

This sequence belongs to the SecA family. Monomer and homodimer. Part of the essential Sec protein translocation apparatus which comprises SecA, SecYEG and auxiliary proteins SecDF-YajC and YidC. Zn(2+) is required as a cofactor.

The protein localises to the cell inner membrane. It is found in the cytoplasm. It catalyses the reaction ATP + H2O + cellular proteinSide 1 = ADP + phosphate + cellular proteinSide 2.. Part of the Sec protein translocase complex. Interacts with the SecYEG preprotein conducting channel. Has a central role in coupling the hydrolysis of ATP to the transfer of proteins into and across the cell membrane, serving both as a receptor for the preprotein-SecB complex and as an ATP-driven molecular motor driving the stepwise translocation of polypeptide chains across the membrane. The sequence is that of Protein translocase subunit SecA from Pseudomonas putida (strain W619).